Here is a 98-residue protein sequence, read N- to C-terminus: NADH-ubiquinone oxidoreductase chain 4L (98 aa).

Transmembrane regions (helical) follow at residues 1 to 21, 28 to 48, and 59 to 79; these read MAPI…GVLI, STLL…TLLI, and APLI…ALLV.

It belongs to the complex I subunit 4L family. Core subunit of respiratory chain NADH dehydrogenase (Complex I) which is composed of 45 different subunits.

It localises to the mitochondrion inner membrane. It catalyses the reaction a ubiquinone + NADH + 5 H(+)(in) = a ubiquinol + NAD(+) + 4 H(+)(out). In terms of biological role, core subunit of the mitochondrial membrane respiratory chain NADH dehydrogenase (Complex I) which catalyzes electron transfer from NADH through the respiratory chain, using ubiquinone as an electron acceptor. Part of the enzyme membrane arm which is embedded in the lipid bilayer and involved in proton translocation. This chain is NADH-ubiquinone oxidoreductase chain 4L (MT-ND4L), found in Isoodon macrourus (Short-nosed bandicoot).